Reading from the N-terminus, the 503-residue chain is Cytosolic carboxypeptidase 6 (503 aa).

In terms of domain architecture, Peptidase M14 spans 167–438 (YPYTYTRFQH…NVARTFLDYY (272 aa)). Residues H230, E233, and H328 each coordinate Zn(2+). E401 (proton donor/acceptor) is an active-site residue. Basic and acidic residues-rich tracts occupy residues 459–469 (IEVQRRKEKSP) and 487–503 (KGDK…STPF). Positions 459-503 (IEVQRRKEKSPPYKHPLLRGPASNYPNSKGDKKSSVNHKDPSTPF) are disordered.

Belongs to the peptidase M14 family. As to quaternary structure, interacts with MYLK. Requires Zn(2+) as cofactor.

The protein resides in the cytoplasm. It is found in the cytosol. The protein localises to the cytoskeleton. Its subcellular location is the microtubule organizing center. It localises to the centrosome. The protein resides in the centriole. It is found in the golgi apparatus. The protein localises to the cilium basal body. It carries out the reaction (L-glutamyl)(n+1)-gamma-L-glutamyl-L-glutamyl-[protein] + H2O = (L-glutamyl)(n)-gamma-L-glutamyl-L-glutamyl-[protein] + L-glutamate. The catalysed reaction is C-terminal L-alpha-aminoacyl-L-glutamyl-L-glutamyl-[tubulin] + H2O = C-terminal L-alpha-aminoacyl-L-glutamyl-[tubulin] + L-glutamate. Metallocarboxypeptidase that mediates protein deglutamylation of tubulin and non-tubulin target proteins. Catalyzes the removal of polyglutamate side chains present on the gamma-carboxyl group of glutamate residues within the C-terminal tail of tubulin protein. Specifically cleaves tubulin long-side-chains, while it is not able to remove the branching point glutamate. Also catalyzes the removal of polyglutamate residues from the carboxy-terminus of non-tubulin proteins such as MYLK. Mediates the deglutamylation of nucleotidyltransferase CGAS, leading to CGAS antiviral defense response activation. Involved in KLF4 deglutamylation which promotes KLF4 proteasome-mediated degradation, thereby negatively regulating cell pluripotency maintenance and embryogenesis. This chain is Cytosolic carboxypeptidase 6, found in Homo sapiens (Human).